We begin with the raw amino-acid sequence, 290 residues long: Bifunctional protein FolD 1 (290 aa).

NADP(+)-binding positions include 172–174 and Ile-238; that span reads GAS.

The protein belongs to the tetrahydrofolate dehydrogenase/cyclohydrolase family. Homodimer.

It catalyses the reaction (6R)-5,10-methylene-5,6,7,8-tetrahydrofolate + NADP(+) = (6R)-5,10-methenyltetrahydrofolate + NADPH. The catalysed reaction is (6R)-5,10-methenyltetrahydrofolate + H2O = (6R)-10-formyltetrahydrofolate + H(+). It functions in the pathway one-carbon metabolism; tetrahydrofolate interconversion. Its function is as follows. Catalyzes the oxidation of 5,10-methylenetetrahydrofolate to 5,10-methenyltetrahydrofolate and then the hydrolysis of 5,10-methenyltetrahydrofolate to 10-formyltetrahydrofolate. The sequence is that of Bifunctional protein FolD 1 from Pseudomonas putida (strain GB-1).